The chain runs to 468 residues: 6-phosphogluconate dehydrogenase, decarboxylating (468 aa).

NADP(+)-binding positions include 9–14 (GLAVMG), 32–34 (NRS), 73–75 (VQA), and Asn-101. Substrate contacts are provided by residues Asn-101 and 127–129 (SGG). The active-site Proton acceptor is Lys-182. 185–186 (HN) contacts substrate. Glu-189 (proton donor) is an active-site residue. The substrate site is built by Tyr-190, Lys-259, Arg-286, Arg-444, and His-450.

It belongs to the 6-phosphogluconate dehydrogenase family. In terms of assembly, homodimer.

The catalysed reaction is 6-phospho-D-gluconate + NADP(+) = D-ribulose 5-phosphate + CO2 + NADPH. Its pathway is carbohydrate degradation; pentose phosphate pathway; D-ribulose 5-phosphate from D-glucose 6-phosphate (oxidative stage): step 3/3. Functionally, catalyzes the oxidative decarboxylation of 6-phosphogluconate to ribulose 5-phosphate and CO(2), with concomitant reduction of NADP to NADPH. This is 6-phosphogluconate dehydrogenase, decarboxylating (gnd) from Staphylococcus aureus (strain COL).